The primary structure comprises 189 residues: Chitin synthase 1 (189 aa).

This sequence belongs to the chitin synthase family. Class I subfamily.

The protein localises to the cell membrane. It carries out the reaction [(1-&gt;4)-N-acetyl-beta-D-glucosaminyl](n) + UDP-N-acetyl-alpha-D-glucosamine = [(1-&gt;4)-N-acetyl-beta-D-glucosaminyl](n+1) + UDP + H(+). Its function is as follows. Polymerizes chitin, a structural polymer of the cell wall and septum, by transferring the sugar moiety of UDP-GlcNAc to the non-reducing end of the growing chitin polymer. The chain is Chitin synthase 1 (CHS1) from Rhinocladiella atrovirens.